Consider the following 215-residue polypeptide: Pyridoxine/pyridoxamine 5'-phosphate oxidase (215 aa).

Substrate-binding positions include 11-14 (RRDY) and Lys69. Residues 64–69 (RVVLLK), 79–80 (YT), Lys86, and Gln108 each bind FMN. Positions 126, 130, and 134 each coordinate substrate. Residues 143-144 (QS) and Trp188 each bind FMN. 194–196 (RLH) contributes to the substrate binding site. Residue Arg198 participates in FMN binding.

The protein belongs to the pyridoxamine 5'-phosphate oxidase family. Homodimer. The cofactor is FMN.

The catalysed reaction is pyridoxamine 5'-phosphate + O2 + H2O = pyridoxal 5'-phosphate + H2O2 + NH4(+). The enzyme catalyses pyridoxine 5'-phosphate + O2 = pyridoxal 5'-phosphate + H2O2. It participates in cofactor metabolism; pyridoxal 5'-phosphate salvage; pyridoxal 5'-phosphate from pyridoxamine 5'-phosphate: step 1/1. Its pathway is cofactor metabolism; pyridoxal 5'-phosphate salvage; pyridoxal 5'-phosphate from pyridoxine 5'-phosphate: step 1/1. Functionally, catalyzes the oxidation of either pyridoxine 5'-phosphate (PNP) or pyridoxamine 5'-phosphate (PMP) into pyridoxal 5'-phosphate (PLP). The chain is Pyridoxine/pyridoxamine 5'-phosphate oxidase from Legionella pneumophila (strain Lens).